Here is a 121-residue protein sequence, read N- to C-terminus: Large ribosomal subunit protein bL12 (121 aa).

The protein belongs to the bacterial ribosomal protein bL12 family. In terms of assembly, homodimer. Part of the ribosomal stalk of the 50S ribosomal subunit. Forms a multimeric L10(L12)X complex, where L10 forms an elongated spine to which 2 to 4 L12 dimers bind in a sequential fashion. Binds GTP-bound translation factors.

Forms part of the ribosomal stalk which helps the ribosome interact with GTP-bound translation factors. Is thus essential for accurate translation. In Lactococcus lactis subsp. cremoris (strain MG1363), this protein is Large ribosomal subunit protein bL12.